The primary structure comprises 593 residues: ATP-dependent lipid A-core flippase (593 aa).

The next 6 membrane-spanning stretches (helical) occupy residues 33–55, 67–87, 146–166, 169–189, 258–278, and 284–304; these read YIFLSADASMIYLINPILNYGFG, ILMLMGVGMVGFIALRSVGSF, AIITVVQDGTFVIGLIVVMFV, WQLSLFLIVVGPFLGLFISII, VIQIIASLVLAFSLFTIAIFG, and GSSWLTAGSFASFFAAAAAIL. The ABC transmembrane type-1 domain occupies 38 to 319; the sequence is ADASMIYLIN…LTKVNVVIQK (282 aa). Residues 351–585 enclose the ABC transporter domain; sequence VTIKDLSFAF…GGLYTGSINR (235 aa). 383-390 is a binding site for ATP; it reads GKSGSGKT.

Belongs to the ABC transporter superfamily. Lipid exporter (TC 3.A.1.106) family. As to quaternary structure, homodimer.

It localises to the cell membrane. The enzyme catalyses ATP + H2O + lipid A-core oligosaccharideSide 1 = ADP + phosphate + lipid A-core oligosaccharideSide 2.. Involved in lipopolysaccharide (LPS) biosynthesis. Translocates lipid A-core from the inner to the outer leaflet of the inner membrane. Transmembrane domains (TMD) form a pore in the inner membrane and the ATP-binding domain (NBD) is responsible for energy generation. The chain is ATP-dependent lipid A-core flippase from Francisella novicida.